A 585-amino-acid polypeptide reads, in one-letter code: Dihydroxy-acid dehydratase, mitochondrial (585 aa).

The transit peptide at 1 to 20 (MGLLTKVATSRQFSTTRCVA) directs the protein to the mitochondrion. Cysteine 70 is a [2Fe-2S] cluster binding site. Mg(2+) is bound at residue aspartate 102. Cysteine 143 is a binding site for [2Fe-2S] cluster. Residue aspartate 144 coordinates Mg(2+). Cysteine 221 lines the [2Fe-2S] cluster pocket. Position 474 (glutamate 474) interacts with Mg(2+). The active-site Proton acceptor is the serine 500.

It belongs to the IlvD/Edd family. [2Fe-2S] cluster is required as a cofactor. It depends on Mg(2+) as a cofactor.

It localises to the mitochondrion. It catalyses the reaction (2R)-2,3-dihydroxy-3-methylbutanoate = 3-methyl-2-oxobutanoate + H2O. It carries out the reaction (2R,3R)-2,3-dihydroxy-3-methylpentanoate = (S)-3-methyl-2-oxopentanoate + H2O. Its pathway is amino-acid biosynthesis; L-isoleucine biosynthesis; L-isoleucine from 2-oxobutanoate: step 3/4. It functions in the pathway amino-acid biosynthesis; L-valine biosynthesis; L-valine from pyruvate: step 3/4. Its activity is regulated as follows. Catalytic activity is inactivated under iron-limiting conditions. Its function is as follows. Dihydroxyacid dehydratase that catalyzes the third step in the common pathway leading to biosynthesis of branched-chain amino acids. Catalyzes the dehydration of (2R,3R)-2,3-dihydroxy-3-methylpentanoate (2,3-dihydroxy-3-methylvalerate) into 2-oxo-3-methylpentanoate (2-oxo-3-methylvalerate) and of (2R)-2,3-dihydroxy-3-methylbutanoate (2,3-dihydroxyisovalerate) into 2-oxo-3-methylbutanoate (2-oxoisovalerate), the penultimate precursor to L-isoleucine and L-valine, respectively. Required for the synthesis of alpha-isopropylmalate which modulates the activity of LEU3 and subsequently regulates the expression of LEU1. This chain is Dihydroxy-acid dehydratase, mitochondrial, found in Saccharomyces cerevisiae (strain ATCC 204508 / S288c) (Baker's yeast).